Here is a 321-residue protein sequence, read N- to C-terminus: tRNA U34 carboxymethyltransferase (321 aa).

Carboxy-S-adenosyl-L-methionine-binding positions include lysine 90, tryptophan 104, lysine 109, glycine 129, 151–153 (DPT), 180–181 (IE), methionine 195, tyrosine 199, and arginine 314.

The protein belongs to the class I-like SAM-binding methyltransferase superfamily. CmoB family. Homotetramer.

It catalyses the reaction carboxy-S-adenosyl-L-methionine + 5-hydroxyuridine(34) in tRNA = 5-carboxymethoxyuridine(34) in tRNA + S-adenosyl-L-homocysteine + H(+). Catalyzes carboxymethyl transfer from carboxy-S-adenosyl-L-methionine (Cx-SAM) to 5-hydroxyuridine (ho5U) to form 5-carboxymethoxyuridine (cmo5U) at position 34 in tRNAs. This is tRNA U34 carboxymethyltransferase from Mannheimia succiniciproducens (strain KCTC 0769BP / MBEL55E).